The chain runs to 250 residues: Hydroxyacylglutathione hydrolase (250 aa).

Zn(2+)-binding residues include His-52, His-54, Asp-56, His-57, His-107, Asp-128, and His-166.

This sequence belongs to the metallo-beta-lactamase superfamily. Glyoxalase II family. In terms of assembly, monomer. It depends on Zn(2+) as a cofactor.

The catalysed reaction is an S-(2-hydroxyacyl)glutathione + H2O = a 2-hydroxy carboxylate + glutathione + H(+). It participates in secondary metabolite metabolism; methylglyoxal degradation; (R)-lactate from methylglyoxal: step 2/2. Its function is as follows. Thiolesterase that catalyzes the hydrolysis of S-D-lactoyl-glutathione to form glutathione and D-lactic acid. The sequence is that of Hydroxyacylglutathione hydrolase from Neisseria gonorrhoeae (strain ATCC 700825 / FA 1090).